A 251-amino-acid chain; its full sequence is Flap endonuclease Xni (251 aa).

D104 serves as a coordination point for Mg(2+). A 5'-3' exonuclease domain is found at V160 to L249. L171, A172, P180, V182, and I185 together coordinate K(+). Residues G184–S189 are interaction with DNA.

The protein belongs to the Xni family. Mg(2+) serves as cofactor. The cofactor is K(+).

Its function is as follows. Has flap endonuclease activity. During DNA replication, flap endonucleases cleave the 5'-overhanging flap structure that is generated by displacement synthesis when DNA polymerase encounters the 5'-end of a downstream Okazaki fragment. This chain is Flap endonuclease Xni, found in Salmonella schwarzengrund (strain CVM19633).